Here is a 316-residue protein sequence, read N- to C-terminus: MSSQPLTAANIFAVLRHLRSLCHPTRPVTTASFASSIASQITPSRAYNNYTPTHYTPLSIPKNSALKQWHFVASYSTVPPAKTEKETTEDTSLSKSTKPKPKKPLPAWAVQKNALKEKFKEGWKPRKKVSPDTMESIRKLHSMDSVKFSTKNLAEEFKISPEAIRRILKSKWRATEAEEIDRRNRWEKRKIRIQEQMMELGLRHTDPTSKDDPSAEEVLSQRHYSSNAIEDLSGEYPPQNRRREGIPQKRIVPEDNSSRKFDPWEVTADDLLGTKRDSFRDNWSKEDSPKARSSSSQRHPRRIEYNERSYKEKPDW.

The transit peptide at 1–27 directs the protein to the mitochondrion; sequence MSSQPLTAANIFAVLRHLRSLCHPTRP. 2 disordered regions span residues 80-105 and 197-316; these read PAKT…KKPL and MMEL…KPDW. Composition is skewed to basic and acidic residues over residues 201-213, 241-263, 272-290, and 302-316; these read GLRH…KDDP, RRRE…KFDP, LGTK…DSPK, and RIEY…KPDW.

Belongs to the RRG9 family.

The protein localises to the mitochondrion. Its function is as follows. Required for respiratory activity and maintenance and expression of the mitochondrial genome. The protein is Required for respiratory growth protein 9, mitochondrial (RRG9) of Arthroderma benhamiae (strain ATCC MYA-4681 / CBS 112371) (Trichophyton mentagrophytes).